The chain runs to 91 residues: Lipolysis-activating peptide 1-alpha chain (91 aa).

Positions 1–21 (MNIKLFCFLSILISLTGLSLS) are cleaved as a signal peptide. Residues 23 to 87 (DDGNYPIDAN…FFDAYKTYCK (65 aa)) enclose the LCN-type CS-alpha/beta domain. Cystine bridges form between C38–C61, C47–C66, and C51–C68.

Belongs to the long (3 C-C) scorpion toxin superfamily. Heterodimer of this alpha chain and a beta chain (AC D9U2A2). As to expression, expressed by the venom gland.

It is found in the secreted. In terms of biological role, the heterodimer LVP1 induces lipolysis in rat adipocytes. Induction of lipolysis by LVP1 appears to be mediated through the beta-2 adrenergic receptor pathway (ADRB2). The chain is Lipolysis-activating peptide 1-alpha chain from Lychas mucronatus (Chinese swimming scorpion).